Reading from the N-terminus, the 141-residue chain is Large ribosomal subunit protein uL11 (141 aa).

The protein belongs to the universal ribosomal protein uL11 family. As to quaternary structure, part of the ribosomal stalk of the 50S ribosomal subunit. Interacts with L10 and the large rRNA to form the base of the stalk. L10 forms an elongated spine to which L12 dimers bind in a sequential fashion forming a multimeric L10(L12)X complex. Post-translationally, one or more lysine residues are methylated.

Forms part of the ribosomal stalk which helps the ribosome interact with GTP-bound translation factors. This Trichlorobacter lovleyi (strain ATCC BAA-1151 / DSM 17278 / SZ) (Geobacter lovleyi) protein is Large ribosomal subunit protein uL11.